Here is a 422-residue protein sequence, read N- to C-terminus: Gamma-glutamyl phosphate reductase (422 aa).

The protein belongs to the gamma-glutamyl phosphate reductase family.

It localises to the cytoplasm. It catalyses the reaction L-glutamate 5-semialdehyde + phosphate + NADP(+) = L-glutamyl 5-phosphate + NADPH + H(+). The protein operates within amino-acid biosynthesis; L-proline biosynthesis; L-glutamate 5-semialdehyde from L-glutamate: step 2/2. In terms of biological role, catalyzes the NADPH-dependent reduction of L-glutamate 5-phosphate into L-glutamate 5-semialdehyde and phosphate. The product spontaneously undergoes cyclization to form 1-pyrroline-5-carboxylate. This chain is Gamma-glutamyl phosphate reductase, found in Chloroflexus aurantiacus (strain ATCC 29366 / DSM 635 / J-10-fl).